The sequence spans 222 residues: MSDISDANKLKHRFRGYFPVVIDVETAGFNSQTDALLEIAVTLLKMDDEGLLGIDKTLHFNIEPFEGANLEPEALAFNGIDPTNPLRGAVSEKEAFLEIFKAVKKAQKASDCHRSIIVAHNAAFDHGFVSKAIERCDLKRSPFHPFATFDTATLAGLAIGHTVLAKACIMAGIPFDNKEAHSALYDTERTAELFCHIVNRWKQLGGWPLLAAGESEDADGEE.

The region spanning 20–194 (VVIDVETAGF…YDTERTAELF (175 aa)) is the Exonuclease domain. Mg(2+) is bound by residues Asp23, Glu25, His181, and Asp186. Residue His181 is the Proton donor/acceptor of the active site.

The protein belongs to the RNase T family. In terms of assembly, homodimer. Mg(2+) is required as a cofactor.

Functionally, trims short 3' overhangs of a variety of RNA species, leaving a one or two nucleotide 3' overhang. Responsible for the end-turnover of tRNA: specifically removes the terminal AMP residue from uncharged tRNA (tRNA-C-C-A). Also appears to be involved in tRNA biosynthesis. This is Ribonuclease T from Shewanella sp. (strain ANA-3).